Here is a 631-residue protein sequence, read N- to C-terminus: Occlusion-derived virus envelope protein E66 (631 aa).

Belongs to the baculoviridae E66 family.

It is found in the virion membrane. In terms of biological role, component of the polyhedra envelope. The polypeptide is Occlusion-derived virus envelope protein E66 (Leucania separata nucleopolyhedrovirus (LsNPV)).